A 133-amino-acid chain; its full sequence is Holo-[acyl-carrier-protein] synthase (133 aa).

D8 and E57 together coordinate Mg(2+).

The protein belongs to the P-Pant transferase superfamily. AcpS family. Requires Mg(2+) as cofactor.

The protein localises to the cytoplasm. The catalysed reaction is apo-[ACP] + CoA = holo-[ACP] + adenosine 3',5'-bisphosphate + H(+). Its function is as follows. Transfers the 4'-phosphopantetheine moiety from coenzyme A to a Ser of acyl-carrier-protein. The sequence is that of Holo-[acyl-carrier-protein] synthase from Bartonella tribocorum (strain CIP 105476 / IBS 506).